The following is a 686-amino-acid chain: Methionine--tRNA ligase (686 aa).

A 'HIGH' region motif is present at residues Pro15–His25. Zn(2+) is bound by residues Cys146, Cys149, Cys159, and Cys162. The short motif at Lys331–Ser335 is the 'KMSKS' region element. Residue Lys334 coordinates ATP. In terms of domain architecture, tRNA-binding spans Asp584 to Met686.

Belongs to the class-I aminoacyl-tRNA synthetase family. MetG type 1 subfamily. As to quaternary structure, homodimer. Requires Zn(2+) as cofactor.

Its subcellular location is the cytoplasm. It catalyses the reaction tRNA(Met) + L-methionine + ATP = L-methionyl-tRNA(Met) + AMP + diphosphate. Functionally, is required not only for elongation of protein synthesis but also for the initiation of all mRNA translation through initiator tRNA(fMet) aminoacylation. In Mannheimia succiniciproducens (strain KCTC 0769BP / MBEL55E), this protein is Methionine--tRNA ligase.